We begin with the raw amino-acid sequence, 159 residues long: Peripheral myelin protein 22 (159 aa).

Position 1 (Met1) is a topological domain, cytoplasmic. The helical transmembrane segment at 2–31 (LLLLLGIIVLHVAVLVLLFVATIVSQWIVG) threads the bilayer. Over 32-64 (NGHATDLWQNCSTTSGNVQHCLSSSANEWLQSV) the chain is Extracellular. N-linked (GlcNAc...) asparagine glycosylation occurs at Asn41. The chain crosses the membrane as a helical span at residues 65-91 (QATMILSIIFSVLSLFLFFCQLFTLTK). Residues 92-95 (GGRF) are Cytoplasmic-facing. Residues 96-119 (YITGIFQILAGLCVMSAASIYTVR) traverse the membrane as a helical segment. At 120 to 133 (HPEWHLDSAYSYGF) the chain is on the extracellular side. Residues 134-156 (AYILAWVAFPLALLSGVVYVILR) form a helical membrane-spanning segment. The Cytoplasmic segment spans residues 157–159 (KRE).

It belongs to the PMP-22/EMP/MP20 family. Post-translationally, ubiquitinated by the DCX(DCAF13) E3 ubiquitin ligase complex, leading to its degradation.

The protein resides in the cell membrane. Might be involved in growth regulation, and in myelinization in the peripheral nervous system. The chain is Peripheral myelin protein 22 (PMP22) from Equus caballus (Horse).